Reading from the N-terminus, the 412-residue chain is L-cysteine:1D-myo-inositol 2-amino-2-deoxy-alpha-D-glucopyranoside ligase (412 aa).

Positions 1–30 are disordered; sequence MQTWSSPSVPKLRGAPRPLRLHDTATGEVR. Residue Cys-43 coordinates Zn(2+). Residues 43–46, Thr-58, and 81–83 contribute to the L-cysteinyl-5'-AMP site; these read CGIT and NVT. Residues 45–55 carry the 'HIGH' region motif; the sequence is ITPYDATHLGH. A 'ERGGDP' region motif is present at residues 187–192; that stretch reads ERGGDP. L-cysteinyl-5'-AMP is bound at residue Trp-227. Cys-231 contacts Zn(2+). 249-251 is an L-cysteinyl-5'-AMP binding site; the sequence is GSD. Residue His-256 coordinates Zn(2+). Position 283 (Ile-283) interacts with L-cysteinyl-5'-AMP. The 'KMSKS' region signature appears at 289–293; the sequence is KMSKS.

It belongs to the class-I aminoacyl-tRNA synthetase family. MshC subfamily. In terms of assembly, monomer. Zn(2+) is required as a cofactor.

It carries out the reaction 1D-myo-inositol 2-amino-2-deoxy-alpha-D-glucopyranoside + L-cysteine + ATP = 1D-myo-inositol 2-(L-cysteinylamino)-2-deoxy-alpha-D-glucopyranoside + AMP + diphosphate + H(+). Functionally, catalyzes the ATP-dependent condensation of GlcN-Ins and L-cysteine to form L-Cys-GlcN-Ins. In Actinosynnema mirum (strain ATCC 29888 / DSM 43827 / JCM 3225 / NBRC 14064 / NCIMB 13271 / NRRL B-12336 / IMRU 3971 / 101), this protein is L-cysteine:1D-myo-inositol 2-amino-2-deoxy-alpha-D-glucopyranoside ligase.